A 191-amino-acid polypeptide reads, in one-letter code: Large ribosomal subunit protein bL9c (191 aa).

A chloroplast-targeting transit peptide spans 1-35 (MASPSCASTLPWTAAAFSYPRRLQTRRAPSLVIVA).

This sequence belongs to the bacterial ribosomal protein bL9 family. In terms of assembly, part of the 50S ribosomal subunit.

It is found in the plastid. The protein resides in the chloroplast. Functionally, binds to the 23S rRNA. The sequence is that of Large ribosomal subunit protein bL9c (RPL9) from Triticum aestivum (Wheat).